The sequence spans 289 residues: ATP synthase gamma chain (289 aa).

Belongs to the ATPase gamma chain family. As to quaternary structure, F-type ATPases have 2 components, CF(1) - the catalytic core - and CF(0) - the membrane proton channel. CF(1) has five subunits: alpha(3), beta(3), gamma(1), delta(1), epsilon(1). CF(0) has three main subunits: a, b and c.

The protein resides in the cell inner membrane. In terms of biological role, produces ATP from ADP in the presence of a proton gradient across the membrane. The gamma chain is believed to be important in regulating ATPase activity and the flow of protons through the CF(0) complex. The sequence is that of ATP synthase gamma chain from Herminiimonas arsenicoxydans.